Reading from the N-terminus, the 40-residue chain is Sarcotoxin-1D (40 aa).

It belongs to the cecropin family.

Its subcellular location is the secreted. Its function is as follows. Sarcotoxins, which are potent bactericidal proteins, are produced in response to injury. They are cytotoxic to both Gram-positive and Gram-negative bacteria. The polypeptide is Sarcotoxin-1D (Sarcophaga peregrina (Flesh fly)).